The following is a 142-amino-acid chain: Hemoglobin subunit alpha (142 aa).

A Globin domain is found at 2 to 142; the sequence is VLSSQNKKAI…VAYELSSCYR (141 aa). His-60 contacts O2. His-89 is a heme b binding site.

It belongs to the globin family. As to quaternary structure, heterotetramer of two alpha chains and two beta chains. In terms of tissue distribution, red blood cells.

Functionally, involved in oxygen transport from gills to the various peripheral tissues. The polypeptide is Hemoglobin subunit alpha (hba) (Hemitrygon akajei (Red stingray)).